The sequence spans 559 residues: Glycerol kinase (559 aa).

Thr-20 serves as a coordination point for ADP. Residues Thr-20, Ser-21, and Ser-22 each coordinate ATP. Position 20 (Thr-20) interacts with sn-glycerol 3-phosphate. Position 24 (Arg-24) interacts with ADP. Residues Arg-94, Glu-95, and Tyr-148 each coordinate sn-glycerol 3-phosphate. Glycerol contacts are provided by Arg-94, Glu-95, and Tyr-148. Beta-D-fructose 1,6-bisphosphate is bound at residue Gly-252. Asp-265 is a sn-glycerol 3-phosphate binding site. 2 residues coordinate glycerol: Asp-265 and Gln-266. 4 residues coordinate ADP: Thr-287, Gly-332, Gly-433, and Asn-437. Residues Thr-287, Gly-332, and Gly-433 each coordinate ATP. Residues 532–552 (IFCSLPLGFFIVSSMVMLIGA) form a helical membrane-spanning segment.

This sequence belongs to the FGGY kinase family. As to expression, widely expressed in fetal and adult tissues. In terms of tissue distribution, the sole isoform expressed in adult liver and kidney.

The protein resides in the mitochondrion outer membrane. It is found in the nucleus. It localises to the cytoplasm. Its subcellular location is the cytosol. It carries out the reaction glycerol + ATP = sn-glycerol 3-phosphate + ADP + H(+). Its pathway is polyol metabolism; glycerol degradation via glycerol kinase pathway; sn-glycerol 3-phosphate from glycerol: step 1/1. Its activity is regulated as follows. Potassium and magnesium-dependent. Kinase that plays a key role in glycerol metabolism, catalyzing its phosphorylation to produce sn-glycerol 3-phosphate. Sn-glycerol 3-phosphate is a crucial intermediate in various metabolic pathways, such as the synthesis of glycerolipids and triglycerides, glycogenesis, glycolysis and gluconeogenesis. This is Glycerol kinase from Homo sapiens (Human).